Reading from the N-terminus, the 885-residue chain is Sensor histidine kinase KdpD (885 aa).

A run of 4 helical transmembrane segments spans residues 384–404 (AIDMLKMILIQIICVMMGLWI), 415–435 (IILMIFLIGIILLSIWTRSFI), 436–456 (IGFLAAIINVFVFNYFFTEPR), and 464–484 (FDYPITFIVSILTSILTSALL). The Histidine kinase domain maps to 660 to 880 (SISHDIRTPL…IFYFNIYTDF (221 aa)). H663 carries the post-translational modification Phosphohistidine; by autocatalysis.

It localises to the membrane. The enzyme catalyses ATP + protein L-histidine = ADP + protein N-phospho-L-histidine.. Its activity is regulated as follows. Cyclic di-AMP is a negative regulator of the Kdp system. Functionally, member of the two-component regulatory system KdpD/KdpE that regulates the transcription of a series of virulence factors through sensing external K(+) concentrations. Also regulates capsular polysaccharide production. May function as a membrane-associated protein kinase that phosphorylates KdpE in response to environmental signals. In turn, KpdE functions as a transcriptional regulator by direct binding to promoter regions of target genes including spa, hla, aur and geh. This Staphylococcus aureus (strain NCTC 8325 / PS 47) protein is Sensor histidine kinase KdpD.